We begin with the raw amino-acid sequence, 270 residues long: Carboxy-S-adenosyl-L-methionine synthase (270 aa).

S-adenosyl-L-methionine contacts are provided by residues tyrosine 65, 90–92, 143–144, asparagine 158, and arginine 225; these read GCS and DI.

It belongs to the class I-like SAM-binding methyltransferase superfamily. Cx-SAM synthase family. Homodimer.

It catalyses the reaction prephenate + S-adenosyl-L-methionine = carboxy-S-adenosyl-L-methionine + 3-phenylpyruvate + H2O. Catalyzes the conversion of S-adenosyl-L-methionine (SAM) to carboxy-S-adenosyl-L-methionine (Cx-SAM). This Chromohalobacter salexigens (strain ATCC BAA-138 / DSM 3043 / CIP 106854 / NCIMB 13768 / 1H11) protein is Carboxy-S-adenosyl-L-methionine synthase.